We begin with the raw amino-acid sequence, 135 residues long: Nitrogen fixation protein NifU 1 (135 aa).

Residues 1 to 10 (MRDMQDDDTK) show a composition bias toward basic and acidic residues. The interval 1 to 29 (MRDMQDDDTKSPAPPPAAAAAARRAAGQA) is disordered. The span at 18-29 (AAAAARRAAGQA) shows a compositional bias: low complexity.

This sequence belongs to the NifU family.

May be involved in the formation or repair of [Fe-S] clusters present in iron-sulfur proteins. The protein is Nitrogen fixation protein NifU 1 (nifU1) of Rhodobacter capsulatus (Rhodopseudomonas capsulata).